The chain runs to 363 residues: UDP-N-acetylglucosamine--N-acetylmuramyl-(pentapeptide) pyrophosphoryl-undecaprenol N-acetylglucosamine transferase (363 aa).

UDP-N-acetyl-alpha-D-glucosamine-binding positions include Thr14 to Gly16, Arg171, Ser200, and Gln290.

The protein belongs to the glycosyltransferase 28 family. MurG subfamily.

Its subcellular location is the cell inner membrane. It carries out the reaction di-trans,octa-cis-undecaprenyl diphospho-N-acetyl-alpha-D-muramoyl-L-alanyl-D-glutamyl-meso-2,6-diaminopimeloyl-D-alanyl-D-alanine + UDP-N-acetyl-alpha-D-glucosamine = di-trans,octa-cis-undecaprenyl diphospho-[N-acetyl-alpha-D-glucosaminyl-(1-&gt;4)]-N-acetyl-alpha-D-muramoyl-L-alanyl-D-glutamyl-meso-2,6-diaminopimeloyl-D-alanyl-D-alanine + UDP + H(+). Its pathway is cell wall biogenesis; peptidoglycan biosynthesis. Its function is as follows. Cell wall formation. Catalyzes the transfer of a GlcNAc subunit on undecaprenyl-pyrophosphoryl-MurNAc-pentapeptide (lipid intermediate I) to form undecaprenyl-pyrophosphoryl-MurNAc-(pentapeptide)GlcNAc (lipid intermediate II). In Borreliella burgdorferi (strain ATCC 35210 / DSM 4680 / CIP 102532 / B31) (Borrelia burgdorferi), this protein is UDP-N-acetylglucosamine--N-acetylmuramyl-(pentapeptide) pyrophosphoryl-undecaprenol N-acetylglucosamine transferase.